A 187-amino-acid polypeptide reads, in one-letter code: Inosine triphosphate pyrophosphatase (187 aa).

ITP is bound at residue Thr-11 to Lys-16. Residue Glu-39 coordinates Mg(2+). ITP-binding positions include Lys-51, Asp-67–Thr-68, Lys-84, Phe-143–Asp-146, Lys-164, and His-169–Arg-170.

This sequence belongs to the HAM1 NTPase family. In terms of assembly, homodimer. It depends on Mg(2+) as a cofactor. Requires Mn(2+) as cofactor.

It localises to the cytoplasm. Its subcellular location is the nucleus. It carries out the reaction ITP + H2O = IMP + diphosphate + H(+). The catalysed reaction is dITP + H2O = dIMP + diphosphate + H(+). The enzyme catalyses XTP + H2O = XMP + diphosphate + H(+). In terms of biological role, pyrophosphatase that hydrolyzes non-canonical purine nucleotides such as inosine triphosphate (ITP), deoxyinosine triphosphate (dITP) or xanthosine 5'-triphosphate (XTP) to their respective monophosphate derivatives. The enzyme does not distinguish between the deoxy- and ribose forms. Probably excludes non-canonical purines from RNA and DNA precursor pools, thus preventing their incorporation into RNA and DNA and avoiding chromosomal lesions. This Aspergillus fumigatus (strain ATCC MYA-4609 / CBS 101355 / FGSC A1100 / Af293) (Neosartorya fumigata) protein is Inosine triphosphate pyrophosphatase.